Here is a 258-residue protein sequence, read N- to C-terminus: Venom plasminogen activator LV-PA (258 aa).

An N-terminal signal peptide occupies residues 1-18 (MVLITVLANLLILQLSYA). The propeptide occupies 19 to 24 (QKSSKL). Residues 25 to 249 (VFGGDECNIN…YTDWIQSIIA (225 aa)) form the Peptidase S1 domain. An N-linked (GlcNAc...) asparagine glycan is attached at N44. C50 and C66 form a disulfide bridge. Active-site charge relay system residues include H65 and D110. 3 disulfides stabilise this stretch: C142–C210, C174–C189, and C200–C225. S204 (charge relay system) is an active-site residue.

Belongs to the peptidase S1 family. Snake venom subfamily. Monomer. Post-translationally, N-glycosylated. PubMed:17034951 shows that it contains approximately 10% carbohydrates, PubMed:10871053 shows that it contains approximately 20% carbohydrates. In terms of tissue distribution, expressed by the venom gland.

The protein resides in the secreted. With respect to regulation, inhibited by the serine protease inhibitors NPGB, PMSF, p-aminobenzamidine and aprotinin. Not inhibited by soybean trypsin inhibitor or EDTA. Snake venom serine protease that activates plasminogen. Weakly hydrolyzes the alpha chain of human fibrinogen without releasing fibrinopeptide A. Does not hydrolyze plasma kallikrein or factor Xa. Does not clot fibrinogen. Does not affect platelet function. Induces hypotensive effects on rats. Shows a preferential cleavage at Lys-|-Xaa over Arg-|-Xaa bonds. In Lachesis muta muta (Bushmaster), this protein is Venom plasminogen activator LV-PA.